A 368-amino-acid chain; its full sequence is Histidinol-phosphate aminotransferase (368 aa).

At Lys-215 the chain carries N6-(pyridoxal phosphate)lysine.

Belongs to the class-II pyridoxal-phosphate-dependent aminotransferase family. Histidinol-phosphate aminotransferase subfamily. As to quaternary structure, homodimer. It depends on pyridoxal 5'-phosphate as a cofactor.

It carries out the reaction L-histidinol phosphate + 2-oxoglutarate = 3-(imidazol-4-yl)-2-oxopropyl phosphate + L-glutamate. Its pathway is amino-acid biosynthesis; L-histidine biosynthesis; L-histidine from 5-phospho-alpha-D-ribose 1-diphosphate: step 7/9. The chain is Histidinol-phosphate aminotransferase (hisC) from Buchnera aphidicola subsp. Acyrthosiphon pisum (strain APS) (Acyrthosiphon pisum symbiotic bacterium).